The sequence spans 292 residues: Bifunctional protein FolD (292 aa).

NADP(+)-binding positions include 169 to 171, T196, and V237; that span reads GRG.

It belongs to the tetrahydrofolate dehydrogenase/cyclohydrolase family. As to quaternary structure, homodimer.

It carries out the reaction (6R)-5,10-methylene-5,6,7,8-tetrahydrofolate + NADP(+) = (6R)-5,10-methenyltetrahydrofolate + NADPH. It catalyses the reaction (6R)-5,10-methenyltetrahydrofolate + H2O = (6R)-10-formyltetrahydrofolate + H(+). It participates in one-carbon metabolism; tetrahydrofolate interconversion. Its function is as follows. Catalyzes the oxidation of 5,10-methylenetetrahydrofolate to 5,10-methenyltetrahydrofolate and then the hydrolysis of 5,10-methenyltetrahydrofolate to 10-formyltetrahydrofolate. In Bifidobacterium longum (strain NCC 2705), this protein is Bifunctional protein FolD.